Here is a 227-residue protein sequence, read N- to C-terminus: UPF0173 metal-dependent hydrolase BCAH187_A4741 (227 aa).

Belongs to the UPF0173 family.

The protein is UPF0173 metal-dependent hydrolase BCAH187_A4741 of Bacillus cereus (strain AH187).